A 154-amino-acid chain; its full sequence is Myoglobin (154 aa).

The Globin domain occupies Gly-2 to Lys-148. A Phosphoserine modification is found at Ser-4. His-65 is a binding site for nitrite. His-65 provides a ligand contact to O2. Residue Thr-68 is modified to Phosphothreonine. A heme b-binding site is contributed by His-94.

The protein belongs to the globin family. As to quaternary structure, monomeric.

It localises to the cytoplasm. It is found in the sarcoplasm. The enzyme catalyses Fe(III)-heme b-[protein] + nitric oxide + H2O = Fe(II)-heme b-[protein] + nitrite + 2 H(+). The catalysed reaction is H2O2 + AH2 = A + 2 H2O. In terms of biological role, monomeric heme protein which primary function is to store oxygen and facilitate its diffusion within muscle tissues. Reversibly binds oxygen through a pentacoordinated heme iron and enables its timely and efficient release as needed during periods of heightened demand. Depending on the oxidative conditions of tissues and cells, and in addition to its ability to bind oxygen, it also has a nitrite reductase activity whereby it regulates the production of bioactive nitric oxide. Under stress conditions, like hypoxia and anoxia, it also protects cells against reactive oxygen species thanks to its pseudoperoxidase activity. The chain is Myoglobin (MB) from Orycteropus afer (Aardvark).